Reading from the N-terminus, the 529-residue chain is Tyrosinase (529 aa).

A signal peptide spans 1–18 (MLLAALCCLLWSFRTSAG). Residues 19–472 (HFPRACASSK…IKPFLEQASR (454 aa)) are Lumenal-facing. Asn86, Asn111, and Asn161 each carry an N-linked (GlcNAc...) asparagine glycan. Residues His180, His202, and His211 each contribute to the Cu cation site. Residues Asn230 and Asn336 are each glycosylated (N-linked (GlcNAc...) asparagine). His362 and His366 together coordinate Cu cation. Asn370 carries an N-linked (GlcNAc...) asparagine glycan. Position 389 (His389) interacts with Cu cation. A helical transmembrane segment spans residues 473-495 (IWPWLIGAAVVGSVLTAVLGRLT). At 496–529 (SLLCRRKRKQLREERQPLLMEKEDYHSLLYQTHV) the chain is on the cytoplasmic side.

It belongs to the tyrosinase family. Forms an OPN3-dependent complex with DCT in response to blue light in melanocytes. Cu(2+) serves as cofactor. Post-translationally, glycosylated.

It is found in the melanosome membrane. Its subcellular location is the melanosome. It catalyses the reaction 2 L-dopa + O2 = 2 L-dopaquinone + 2 H2O. The catalysed reaction is L-tyrosine + O2 = L-dopaquinone + H2O. It carries out the reaction 2 5,6-dihydroxyindole-2-carboxylate + O2 = 2 indole-5,6-quinone-2-carboxylate + 2 H2O. Its function is as follows. This is a copper-containing oxidase that functions in the formation of pigments such as melanins and other polyphenolic compounds. Catalyzes the initial and rate limiting step in the cascade of reactions leading to melanin production from tyrosine. In addition to hydroxylating tyrosine to DOPA (3,4-dihydroxyphenylalanine), also catalyzes the oxidation of DOPA to DOPA-quinone, and possibly the oxidation of DHI (5,6-dihydroxyindole) to indole-5,6 quinone. This is Tyrosinase (TYR) from Felis catus (Cat).